A 418-amino-acid chain; its full sequence is Glutamyl-tRNA reductase (418 aa).

Substrate-binding positions include 49–52 (TCNR), serine 107, 112–114 (EPQ), and glutamine 118. Cysteine 50 (nucleophile) is an active-site residue. 187–192 (GAGETI) lines the NADP(+) pocket.

Belongs to the glutamyl-tRNA reductase family. As to quaternary structure, homodimer.

The catalysed reaction is (S)-4-amino-5-oxopentanoate + tRNA(Glu) + NADP(+) = L-glutamyl-tRNA(Glu) + NADPH + H(+). The protein operates within porphyrin-containing compound metabolism; protoporphyrin-IX biosynthesis; 5-aminolevulinate from L-glutamyl-tRNA(Glu): step 1/2. In terms of biological role, catalyzes the NADPH-dependent reduction of glutamyl-tRNA(Glu) to glutamate 1-semialdehyde (GSA). The chain is Glutamyl-tRNA reductase from Aeromonas salmonicida (strain A449).